Consider the following 94-residue polypeptide: Co-chaperonin GroES (94 aa).

This sequence belongs to the GroES chaperonin family. Heptamer of 7 subunits arranged in a ring. Interacts with the chaperonin GroEL.

Its subcellular location is the cytoplasm. Its function is as follows. Together with the chaperonin GroEL, plays an essential role in assisting protein folding. The GroEL-GroES system forms a nano-cage that allows encapsulation of the non-native substrate proteins and provides a physical environment optimized to promote and accelerate protein folding. GroES binds to the apical surface of the GroEL ring, thereby capping the opening of the GroEL channel. The chain is Co-chaperonin GroES from Streptococcus pneumoniae (strain 70585).